The primary structure comprises 450 residues: Phosphoglucosamine mutase (450 aa).

Residue serine 101 is the Phosphoserine intermediate of the active site. Positions 101, 241, 243, and 245 each coordinate Mg(2+). The residue at position 101 (serine 101) is a Phosphoserine.

Belongs to the phosphohexose mutase family. It depends on Mg(2+) as a cofactor. Post-translationally, activated by phosphorylation.

It carries out the reaction alpha-D-glucosamine 1-phosphate = D-glucosamine 6-phosphate. Its function is as follows. Catalyzes the conversion of glucosamine-6-phosphate to glucosamine-1-phosphate. The protein is Phosphoglucosamine mutase of Lysinibacillus sphaericus (strain C3-41).